A 568-amino-acid polypeptide reads, in one-letter code: NADH-ubiquinone oxidoreductase chain 5 (568 aa).

Transmembrane regions (helical) follow at residues 7–27 (LGLLMLILTGYLFIFTGSSFG), 44–64 (FSFSFLLDNVSMIFVGTVLVI), 90–110 (WLFVLSMVFMILVPNLLMLLI), 144–164 (IGDVLVLISISIFLSEGGWLI), 165–185 (YSYHPVQMWLNLGFMVVFAGM), 210–232 (LVHSSTLVTAGVYLVLRSFYIIS), 240–260 (VLMILSLFTLVLAGSSAVFAF), 274–294 (LSLMMFSISILLPSVAFFHLV), 297–317 (AVFKALLFLGAGGVIHSNQSI), 334–354 (MGAMSVAIVSLSGAPFMSGFF), 378–398 (LLGLIFTSFYSARIVFSVMLG), 426–446 (AIILGVVLGSKMESFGFVVVL), 452–472 (LSVFFIPFAGLILWRGVISKL), and 547–567 (FTYQLVVWGLLVAGGVSLIIF).

The protein belongs to the complex I subunit 5 family.

It is found in the mitochondrion inner membrane. The enzyme catalyses a ubiquinone + NADH + 5 H(+)(in) = a ubiquinol + NAD(+) + 4 H(+)(out). Core subunit of the mitochondrial membrane respiratory chain NADH dehydrogenase (Complex I) that is believed to belong to the minimal assembly required for catalysis. Complex I functions in the transfer of electrons from NADH to the respiratory chain. The immediate electron acceptor for the enzyme is believed to be ubiquinone. In Mytilus edulis (Blue mussel), this protein is NADH-ubiquinone oxidoreductase chain 5 (ND5).